We begin with the raw amino-acid sequence, 425 residues long: Zinc finger protein 789 (425 aa).

Residues 11–82 enclose the KRAB domain; the sequence is LSFEDVAMYF…DLPRTGNRKA (72 aa). 8 consecutive C2H2-type zinc fingers follow at residues 201-223, 229-251, 257-279, 285-307, 313-335, 341-363, 369-391, and 397-419; these read YECS…QRIH, FECK…KQCH, YRCH…KRIH, YKCS…QVIH, HKCL…QQIH, HKCS…QRIH, FQCG…QVIH, and YQCV…QGTH.

The protein belongs to the krueppel C2H2-type zinc-finger protein family.

It localises to the nucleus. May be involved in transcriptional regulation. This Homo sapiens (Human) protein is Zinc finger protein 789 (ZNF789).